A 691-amino-acid chain; its full sequence is Alpha-1,4-glucan:maltose-1-phosphate maltosyltransferase (691 aa).

Positions 280, 341, and 376 each coordinate alpha-maltose 1-phosphate. Residue aspartate 411 is the Nucleophile of the active site. Asparagine 412 lines the alpha-maltose 1-phosphate pocket. Glutamate 440 (proton donor) is an active-site residue. Residue 550–551 coordinates alpha-maltose 1-phosphate; it reads KY.

It belongs to the glycosyl hydrolase 13 family. GlgE subfamily. In terms of assembly, homodimer.

It catalyses the reaction alpha-maltose 1-phosphate + [(1-&gt;4)-alpha-D-glucosyl](n) = [(1-&gt;4)-alpha-D-glucosyl](n+2) + phosphate. In terms of biological role, maltosyltransferase that uses maltose 1-phosphate (M1P) as the sugar donor to elongate linear or branched alpha-(1-&gt;4)-glucans. Is involved in a branched alpha-glucan biosynthetic pathway from trehalose, together with TreS, Mak and GlgB. The sequence is that of Alpha-1,4-glucan:maltose-1-phosphate maltosyltransferase from Arcanobacterium haemolyticum (strain ATCC 9345 / DSM 20595 / CCM 5947 / CCUG 17215 / LMG 16163 / NBRC 15585 / NCTC 8452 / 11018).